Consider the following 456-residue polypeptide: ATP synthase subunit beta 1 (456 aa).

ATP is bound at residue G152–S159.

This sequence belongs to the ATPase alpha/beta chains family. F-type ATPases have 2 components, CF(1) - the catalytic core - and CF(0) - the membrane proton channel. CF(1) has five subunits: alpha(3), beta(3), gamma(1), delta(1), epsilon(1). CF(0) has three main subunits: a(1), b(2) and c(9-12). The alpha and beta chains form an alternating ring which encloses part of the gamma chain. CF(1) is attached to CF(0) by a central stalk formed by the gamma and epsilon chains, while a peripheral stalk is formed by the delta and b chains.

It localises to the cell membrane. The enzyme catalyses ATP + H2O + 4 H(+)(in) = ADP + phosphate + 5 H(+)(out). In terms of biological role, produces ATP from ADP in the presence of a proton gradient across the membrane. The catalytic sites are hosted primarily by the beta subunits. The polypeptide is ATP synthase subunit beta 1 (Listeria monocytogenes serovar 1/2a (strain ATCC BAA-679 / EGD-e)).